The following is a 123-amino-acid chain: Large ribosomal subunit protein uL24 (123 aa).

It belongs to the universal ribosomal protein uL24 family. Part of the 50S ribosomal subunit.

One of two assembly initiator proteins, it binds directly to the 5'-end of the 23S rRNA, where it nucleates assembly of the 50S subunit. Functionally, one of the proteins that surrounds the polypeptide exit tunnel on the outside of the subunit. The protein is Large ribosomal subunit protein uL24 of Kineococcus radiotolerans (strain ATCC BAA-149 / DSM 14245 / SRS30216).